The primary structure comprises 173 residues: uncharacterized protein (173 aa).

Helical transmembrane passes span F9–V29, I32–H52, M100–V120, and F127–P147.

The protein resides in the membrane. This is an uncharacterized protein from Saccharomyces cerevisiae (strain ATCC 204508 / S288c) (Baker's yeast).